The following is a 259-amino-acid chain: Ribose-5-phosphate isomerase (259 aa).

The protein belongs to the ribose 5-phosphate isomerase family.

It localises to the cytoplasm. The catalysed reaction is aldehydo-D-ribose 5-phosphate = D-ribulose 5-phosphate. Its pathway is carbohydrate degradation; pentose phosphate pathway; D-ribose 5-phosphate from D-ribulose 5-phosphate (non-oxidative stage): step 1/1. The protein is Ribose-5-phosphate isomerase (RKI1) of Vanderwaltozyma polyspora (strain ATCC 22028 / DSM 70294 / BCRC 21397 / CBS 2163 / NBRC 10782 / NRRL Y-8283 / UCD 57-17) (Kluyveromyces polysporus).